The chain runs to 122 residues: Large ribosomal subunit protein uL14 (122 aa).

The protein belongs to the universal ribosomal protein uL14 family. As to quaternary structure, part of the 50S ribosomal subunit. Forms a cluster with proteins L3 and L19. In the 70S ribosome, L14 and L19 interact and together make contacts with the 16S rRNA in bridges B5 and B8.

In terms of biological role, binds to 23S rRNA. Forms part of two intersubunit bridges in the 70S ribosome. The sequence is that of Large ribosomal subunit protein uL14 from Campylobacter jejuni subsp. jejuni serotype O:6 (strain 81116 / NCTC 11828).